Consider the following 467-residue polypeptide: Fumarate hydratase class II (467 aa).

Substrate is bound by residues 98–100 (SGT), R126, 129–132 (HPND), 139–141 (SSN), and T187. H188 functions as the Proton donor/acceptor in the catalytic mechanism. Residue S318 is part of the active site. Substrate-binding positions include S319 and 324-326 (KVN).

The protein belongs to the class-II fumarase/aspartase family. Fumarase subfamily. As to quaternary structure, homotetramer.

The protein localises to the cytoplasm. The enzyme catalyses (S)-malate = fumarate + H2O. It functions in the pathway carbohydrate metabolism; tricarboxylic acid cycle; (S)-malate from fumarate: step 1/1. In terms of biological role, involved in the TCA cycle. Catalyzes the stereospecific interconversion of fumarate to L-malate. The sequence is that of Fumarate hydratase class II from Escherichia coli O157:H7.